The chain runs to 195 residues: Killer cell lectin-like receptor subfamily G member 1 (195 aa).

The Cytoplasmic segment spans residues 1-38 (MTDSVIYSMLELPTATQAQNDYGPQQKSSSSRPSCSCL). Positions 5–10 (VIYSML) match the ITIM motif motif. The chain crosses the membrane as a helical; Signal-anchor for type II membrane protein span at residues 39 to 59 (VAIALGLLTAVLLSVLLYQWI). Over 60 to 195 (LCQGSNYSTC…KCPFADQALF (136 aa)) the chain is Extracellular. A glycan (N-linked (GlcNAc...) asparagine) is linked at Asn-65. An intrachain disulfide couples Cys-75 to Cys-86. The C-type lectin domain maps to 82–185 (YGNHCYYFSV…CEVPLHWVCK (104 aa)). N-linked (GlcNAc...) asparagine glycans are attached at residues Asn-97, Asn-137, and Asn-150. 2 cysteine pairs are disulfide-bonded: Cys-103–Cys-184 and Cys-163–Cys-176.

Forms a monomer and homodimer; disulfide-linked. Interacts (via ITIM motif) with PTPN11 and INPP5D. In terms of tissue distribution, expressed specifically on natural killer (NK) cells and T-cells, mainly CD8 T-cells.

Its subcellular location is the cell membrane. Its function is as follows. Plays an inhibitory role on natural killer (NK) cells and T-cell functions upon binding to their non-MHC ligands. May mediate missing self recognition by binding to a highly conserved site on classical cadherins, enabling it to monitor expression of E-cadherin/CDH1, N-cadherin/CDH2 and R-cadherin/CDH4 on target cells. The protein is Killer cell lectin-like receptor subfamily G member 1 (KLRG1) of Homo sapiens (Human).